The sequence spans 245 residues: Eukaryotic translation initiation factor 3 subunit K (245 aa).

Positions 46-227 (YDCYANLALL…EAKGTVVREN (182 aa)) constitute a PCI domain.

This sequence belongs to the eIF-3 subunit K family. Component of the eukaryotic translation initiation factor 3 (eIF-3) complex.

It localises to the cytoplasm. Functionally, component of the eukaryotic translation initiation factor 3 (eIF-3) complex, which is involved in protein synthesis of a specialized repertoire of mRNAs and, together with other initiation factors, stimulates binding of mRNA and methionyl-tRNAi to the 40S ribosome. The eIF-3 complex specifically targets and initiates translation of a subset of mRNAs involved in cell proliferation. The chain is Eukaryotic translation initiation factor 3 subunit K from Sclerotinia sclerotiorum (strain ATCC 18683 / 1980 / Ss-1) (White mold).